Reading from the N-terminus, the 407-residue chain is MNQNADFCINNVNIATMRSTKQTENDPYGIRENACIFIKNGLIDAIEPAKRRLSSTIKTFDAQRKWLLPGLIDCHTHLVFAGNRALEFEMRQQGMSYAQIAQRGGGIRSTVNATRLASYEGLLNSAIGRAARLVEEGVTTIEIKSGYGLDLATELRMLQVAKDIESYLLVNIQPTYLGAHSVPFEFHEDPDAYVDFVCEHVMPEVIKQGIATSVDVFCESIAFSPVQCEKVFRSAKHYGLNIKAHVEQLSDLKGARLAAKFNALSVDHIEYLPPDDVPAIAKSNTVAVLLPGAFYHLRETQRPPLTALRRHHVPIALASDLNPGSSPVASLLTIMNMGCILFGMTPAEALSGVTRNAAQALGLAQKGQISSGFDADMCLWDIQHPNELSYGINQIRPTRVWVNGKER.

Residues H75 and H77 each contribute to the Fe(3+) site. H75 and H77 together coordinate Zn(2+). The 4-imidazolone-5-propanoate site is built by R84, Y147, and H180. Y147 lines the N-formimidoyl-L-glutamate pocket. H245 is a binding site for Fe(3+). H245 contributes to the Zn(2+) binding site. Residue Q248 coordinates 4-imidazolone-5-propanoate. D320 lines the Fe(3+) pocket. Residue D320 coordinates Zn(2+). N-formimidoyl-L-glutamate contacts are provided by N322 and G324. S325 serves as a coordination point for 4-imidazolone-5-propanoate.

It belongs to the metallo-dependent hydrolases superfamily. HutI family. The cofactor is Zn(2+). Fe(3+) is required as a cofactor.

It localises to the cytoplasm. It catalyses the reaction 4-imidazolone-5-propanoate + H2O = N-formimidoyl-L-glutamate. It participates in amino-acid degradation; L-histidine degradation into L-glutamate; N-formimidoyl-L-glutamate from L-histidine: step 3/3. Catalyzes the hydrolytic cleavage of the carbon-nitrogen bond in imidazolone-5-propanoate to yield N-formimidoyl-L-glutamate. It is the third step in the universal histidine degradation pathway. This Pseudoalteromonas atlantica (strain T6c / ATCC BAA-1087) protein is Imidazolonepropionase.